Consider the following 422-residue polypeptide: Immunoglobulin mu Fc receptor (422 aa).

A signal peptide spans 1–16; it reads MDFWLWLLYFLPVSGA. Residues 18-262 are Extracellular-facing; the sequence is RVLPEVQLNV…DRGLHIPIPE (245 aa). Residues 24–121 form the Ig-like domain; it reads QLNVEWGGSI…GKTQKITLNV (98 aa). Intrachain disulfides connect Cys-37/Cys-103 and Cys-49/Cys-58. Thr-91 carries the phosphothreonine modification. The helical transmembrane segment at 263-283 threads the bilayer; it reads FHILIPTFLGFLLLVLLGLVV. At 284–422 the chain is on the cytoplasmic side; sequence KRAIQRRRAS…YAPGPRSSCP (139 aa). A compositionally biased stretch (basic residues) spans 290 to 308; that stretch reads RRASSRRAGRLAMRRRGRG. Disordered stretches follow at residues 290 to 367 and 391 to 422; these read RRAS…QVLE and VNLE…SSCP. The span at 344 to 363 shows a compositional bias: low complexity; sequence LGPAEAPLLNAPASASPASP.

In terms of assembly, interacts (via Ig-like domain) with IGHM (via CH4/Cmu4 domain), both secreted and membrane-bound IgM; the interaction is glycan-independent and multivalent theoretically involving up to eight binding sites for the IgM pentamer. In terms of processing, phosphorylated on both Tyr and Ser residues. O-glycosylated. Sialylated. O-linked glycans regulate trafficking to the plasma membrane. In terms of tissue distribution, expressed in pre-B cells, immature and mature B cells residing in primary and secondary lymphoid organs (at protein level). In the spleen, highly expressed in follicular and marginal zone B cells and at lower levels in germinal center B cells and plasma cells. Expressed in splenic dendritic cells and in granulocytes. In the peritoneum, expressed in B1-a and B-2 cell lineages. In the bone marrow, expressed in immature B cells and at a lower level in pro- and pre-B cells (at protein level). Expressed in M cells (at protein level).

The protein resides in the cell membrane. The protein localises to the early endosome membrane. Its subcellular location is the golgi apparatus. It localises to the trans-Golgi network membrane. It is found in the lysosome membrane. High-affinity Fc receptor for immunoglobulin M (IgM), both secreted and membrane-bound IgM. Primarily regulates IgM transport and homeostasis. In lymphoid cells, enables exocytosis of membrane-bound IgM on the plasma membrane as well as endocytosis of IgM-antigen complexes toward lysosomes for degradation. In mucosal epithelium, mediates retrotranscytosis of antigen-IgM complexes across mucosal M cells toward antigen-presenting cells in mucosal lymphoid tissues. Triggers costimulatory signaling and mediates most of IgM effector functions involved in B cell development and primary immune response to infection. Likely limits tonic IgM BCR signaling to self-antigens for proper negative selection of autoreactive B cells in the bone marrow and for the maintenance of regulatory B cell pool in peripheral lymphoid organs. Mediates antibody responses to T cell-dependent and T cell-independent antigens and promotes induction of an efficient neutralizing IgG response. Engages in cross-talk with antigen-receptor signaling via the non-canonical NF-kappa-B, MAP kinases and calcium signaling pathways. The chain is Immunoglobulin mu Fc receptor from Mus musculus (Mouse).